The primary structure comprises 612 residues: Dihydroxy-acid dehydratase (612 aa).

Asp81 serves as a coordination point for Mg(2+). Residue Cys122 participates in [2Fe-2S] cluster binding. 2 residues coordinate Mg(2+): Asp123 and Lys124. An N6-carboxylysine modification is found at Lys124. Cys193 provides a ligand contact to [2Fe-2S] cluster. Glu489 contacts Mg(2+). The active-site Proton acceptor is the Ser515.

Belongs to the IlvD/Edd family. In terms of assembly, homodimer. [2Fe-2S] cluster is required as a cofactor. Mg(2+) serves as cofactor.

The enzyme catalyses (2R)-2,3-dihydroxy-3-methylbutanoate = 3-methyl-2-oxobutanoate + H2O. It carries out the reaction (2R,3R)-2,3-dihydroxy-3-methylpentanoate = (S)-3-methyl-2-oxopentanoate + H2O. Its pathway is amino-acid biosynthesis; L-isoleucine biosynthesis; L-isoleucine from 2-oxobutanoate: step 3/4. It participates in amino-acid biosynthesis; L-valine biosynthesis; L-valine from pyruvate: step 3/4. Its function is as follows. Functions in the biosynthesis of branched-chain amino acids. Catalyzes the dehydration of (2R,3R)-2,3-dihydroxy-3-methylpentanoate (2,3-dihydroxy-3-methylvalerate) into 2-oxo-3-methylpentanoate (2-oxo-3-methylvalerate) and of (2R)-2,3-dihydroxy-3-methylbutanoate (2,3-dihydroxyisovalerate) into 2-oxo-3-methylbutanoate (2-oxoisovalerate), the penultimate precursor to L-isoleucine and L-valine, respectively. This chain is Dihydroxy-acid dehydratase, found in Stenotrophomonas maltophilia (strain R551-3).